Reading from the N-terminus, the 335-residue chain is Cytochrome c biogenesis protein CcsA (335 aa).

8 helical membrane-spanning segments follow: residues 15–35 (FLLLFLTMLIYWAGAAFPNVT), 36–56 (WLPTLGTTGVAIANLCMATLL), 68–88 (LSNLYESLFFLAWGVTAIHLV), 97–117 (LVGVVTTPVAMGITAFAALSL), 142–162 (VMMLSYATLMVGSVLAIAFLV), 243–263 (IIGLGFPLLTIGIIAGAVWAN), 278–298 (WALITWLVFAAYLHARITKGW), and 304–324 (AILAASGFVVVWVCYLGVNLL).

The protein belongs to the CcmF/CycK/Ccl1/NrfE/CcsA family. As to quaternary structure, may interact with ccs1.

The protein resides in the cellular thylakoid membrane. Its function is as follows. Required during biogenesis of c-type cytochromes (cytochrome c6 and cytochrome f) at the step of heme attachment. This Crocosphaera subtropica (strain ATCC 51142 / BH68) (Cyanothece sp. (strain ATCC 51142)) protein is Cytochrome c biogenesis protein CcsA.